A 76-amino-acid polypeptide reads, in one-letter code: Exodeoxyribonuclease 7 small subunit (76 aa).

This sequence belongs to the XseB family. In terms of assembly, heterooligomer composed of large and small subunits.

The protein localises to the cytoplasm. The enzyme catalyses Exonucleolytic cleavage in either 5'- to 3'- or 3'- to 5'-direction to yield nucleoside 5'-phosphates.. Bidirectionally degrades single-stranded DNA into large acid-insoluble oligonucleotides, which are then degraded further into small acid-soluble oligonucleotides. The sequence is that of Exodeoxyribonuclease 7 small subunit from Arthrobacter sp. (strain FB24).